A 416-amino-acid polypeptide reads, in one-letter code: S-adenosylmethionine synthase (416 aa).

His16 contributes to the ATP binding site. A Mg(2+)-binding site is contributed by Asp18. Residue Glu44 participates in K(+) binding. Residues Glu57 and Gln100 each coordinate L-methionine. The flexible loop stretch occupies residues 100–110; sequence QSPDIAQGVTQ. ATP-binding positions include 175-177, 251-252, Asp260, 266-267, Ala283, and Lys287; these read DGK, KF, and RK. Asp260 contributes to the L-methionine binding site. Lys291 contacts L-methionine.

It belongs to the AdoMet synthase family. In terms of assembly, homotetramer; dimer of dimers. Requires Mg(2+) as cofactor. It depends on K(+) as a cofactor.

The protein localises to the cytoplasm. It carries out the reaction L-methionine + ATP + H2O = S-adenosyl-L-methionine + phosphate + diphosphate. Its pathway is amino-acid biosynthesis; S-adenosyl-L-methionine biosynthesis; S-adenosyl-L-methionine from L-methionine: step 1/1. Functionally, catalyzes the formation of S-adenosylmethionine (AdoMet) from methionine and ATP. The overall synthetic reaction is composed of two sequential steps, AdoMet formation and the subsequent tripolyphosphate hydrolysis which occurs prior to release of AdoMet from the enzyme. The chain is S-adenosylmethionine synthase from Crocosphaera subtropica (strain ATCC 51142 / BH68) (Cyanothece sp. (strain ATCC 51142)).